The primary structure comprises 66 residues: Large ribosomal subunit protein bL33c (66 aa).

This sequence belongs to the bacterial ribosomal protein bL33 family.

It localises to the plastid. The protein localises to the chloroplast. The protein is Large ribosomal subunit protein bL33c of Cryptomeria japonica (Japanese cedar).